The primary structure comprises 303 residues: Phosphoribosylaminoimidazole-succinocarboxamide synthase (303 aa).

This sequence belongs to the SAICAR synthetase family.

It carries out the reaction 5-amino-1-(5-phospho-D-ribosyl)imidazole-4-carboxylate + L-aspartate + ATP = (2S)-2-[5-amino-1-(5-phospho-beta-D-ribosyl)imidazole-4-carboxamido]succinate + ADP + phosphate + 2 H(+). Its pathway is purine metabolism; IMP biosynthesis via de novo pathway; 5-amino-1-(5-phospho-D-ribosyl)imidazole-4-carboxamide from 5-amino-1-(5-phospho-D-ribosyl)imidazole-4-carboxylate: step 1/2. This is Phosphoribosylaminoimidazole-succinocarboxamide synthase (ADE1) from Pichia angusta (Yeast).